We begin with the raw amino-acid sequence, 490 residues long: Nuclear transcription factor Y subunit beta (490 aa).

Residues 1–48 are disordered; the sequence is MSGNEDFIYDDNSSSSISNQTDGGGGGGSSNNNSGGNANNNNNEGDRE. The segment covering 30–43 has biased composition (low complexity); it reads SNNNSGGNANNNNN. The DNA-binding element occupies 53–59; that stretch reads LPIANII. Residues 80 to 91 are subunit association domain (SAD); it reads VQDCVSEFISFI. Disordered stretches follow at residues 139–195 and 221–264; these read EKNS…QQQQ and QQQQ…NQQY. Low complexity predominate over residues 181 to 195; the sequence is QQQQQPPQVQQQQQQ. Positions 188–219 form a coiled coil; sequence QVQQQQQQQQQQQQQQLQQQQQLQQHQQQQLQ. Residues 269-307 adopt a coiled-coil conformation; it reads QQQQQQQQQQQQQQQQQQQQQQQQQQQQQQQQQQQQQVQ. Disordered stretches follow at residues 325 to 370 and 399 to 490; these read NQQA…QHLQ and QFSN…PSTS. Residues 399–468 show a composition bias toward low complexity; it reads QFSNNNNNNN…GNSLHNSGNS (70 aa). Over residues 478–490 the composition is skewed to polar residues; sequence PYISTNPEYPSTS.

This sequence belongs to the NFYB/HAP3 subunit family. Heterotrimeric transcription factor composed of three components, nfyA, nfyB and nfyC. nfyB and nfyC must interact and dimerize for nfyA association and DNA binding.

The protein resides in the nucleus. Functionally, component of the NF-Y/HAP transcription factor complex. The NF-Y complex stimulates the transcription of various genes by recognizing and binding to a CCAAT motif in promoters. The polypeptide is Nuclear transcription factor Y subunit beta (nfyB) (Dictyostelium discoideum (Social amoeba)).